The primary structure comprises 721 residues: Polyribonucleotide nucleotidyltransferase (721 aa).

Mg(2+)-binding residues include Asp-495 and Asp-501. In terms of domain architecture, KH spans 562-621; it reads PRLLSFRIDPELIGTVIGPGGRTIKGITERTNTKIDIEDGGIVTIASHDGAAAEEAQKII. The S1 motif domain maps to 631 to 699; sequence GEIFPGVVTR…SRGRINLTLR (69 aa).

Belongs to the polyribonucleotide nucleotidyltransferase family. The cofactor is Mg(2+).

It localises to the cytoplasm. It catalyses the reaction RNA(n+1) + phosphate = RNA(n) + a ribonucleoside 5'-diphosphate. Functionally, involved in mRNA degradation. Catalyzes the phosphorolysis of single-stranded polyribonucleotides processively in the 3'- to 5'-direction. The sequence is that of Polyribonucleotide nucleotidyltransferase from Prochlorococcus marinus subsp. pastoris (strain CCMP1986 / NIES-2087 / MED4).